We begin with the raw amino-acid sequence, 78 residues long: Probable [Fe-S]-dependent transcriptional repressor (78 aa).

Iron-sulfur cluster-binding residues include Cys-56, Cys-61, Cys-64, and Cys-70.

It belongs to the FeoC family.

In terms of biological role, may function as a transcriptional regulator that controls feoABC expression. This is Probable [Fe-S]-dependent transcriptional repressor from Salmonella heidelberg (strain SL476).